The primary structure comprises 331 residues: Barley B recombinant-like protein D (331 aa).

A coiled-coil region spans residues 43-101 (ALMNDRDNAIRERDHALAEKKAAIAERDMAFTQRDAAMAERNAAVVERDNALAALELAR). The interval 51–86 (AIRERDHALAEKKAAIAERDMAFTQRDAAMAERNAA) is alanine-zipper. Over residues 104 to 122 (GLNMNNGNGFPQGSLSGSK) the composition is skewed to polar residues. Disordered regions lie at residues 104 to 140 (GLNM…PLQL) and 156 to 205 (AYPI…VGMS).

The protein belongs to the BBR/BPC family. As to quaternary structure, homodimer. Heterodimer.

It localises to the nucleus. Its function is as follows. Transcriptional regulator that specifically binds to GA-rich elements (GAGA-repeats) present in regulatory sequences of genes involved in developmental processes. The sequence is that of Barley B recombinant-like protein D from Oryza sativa subsp. japonica (Rice).